Reading from the N-terminus, the 516-residue chain is ADP-ribosylation factor GTPase-activating protein 3 (516 aa).

The region spanning 10–126 (LTIFKRLRSV…IKSLASQATR (117 aa)) is the Arf-GAP domain. Residues 25–48 (CFDCGAKNPSWASITYGVFLCIDC) form a C4-type zinc finger. A disordered region spans residues 170-199 (AEPSSLTSRPAETTLENNEGGQEQGPCVEG). Positions 173–190 (SSLTSRPAETTLENNEGG) are enriched in polar residues. Serine 231 is subject to Phosphoserine. Positions 243–264 (NEIEKQAQAADKMKEQEDLAKA) form a coiled coil. Serine 270, serine 274, serine 331, and serine 370 each carry phosphoserine. Residues 393–417 (TTGYSDRPTARHKPDYEPVENTDEA) are disordered. 6 positions are modified to phosphoserine: serine 428, serine 451, serine 453, serine 455, serine 457, and serine 458.

It is found in the cytoplasm. The protein localises to the golgi apparatus membrane. Its activity is regulated as follows. GAP activity stimulated by phosphatidylinositol 4,5-bisphosphate (PIP2). GTPase-activating protein (GAP) for ADP ribosylation factor 1 (ARF1). Hydrolysis of ARF1-bound GTP may lead to dissociation of coatomer from Golgi-derived membranes to allow fusion with target membranes. This is ADP-ribosylation factor GTPase-activating protein 3 from Pongo abelii (Sumatran orangutan).